The primary structure comprises 252 residues: Triosephosphate isomerase (252 aa).

A substrate-binding site is contributed by 9–11 (NWK). His-100 serves as the catalytic Electrophile. The active-site Proton acceptor is the Glu-171. Residues Gly-177, Ser-216, and 237-238 (GG) each bind substrate.

Belongs to the triosephosphate isomerase family. Homodimer.

Its subcellular location is the cytoplasm. It carries out the reaction D-glyceraldehyde 3-phosphate = dihydroxyacetone phosphate. It participates in carbohydrate biosynthesis; gluconeogenesis. The protein operates within carbohydrate degradation; glycolysis; D-glyceraldehyde 3-phosphate from glycerone phosphate: step 1/1. Its function is as follows. Involved in the gluconeogenesis. Catalyzes stereospecifically the conversion of dihydroxyacetone phosphate (DHAP) to D-glyceraldehyde-3-phosphate (G3P). This Polynucleobacter necessarius subsp. necessarius (strain STIR1) protein is Triosephosphate isomerase.